The sequence spans 292 residues: Cytochrome c1, heme protein, mitochondrial (292 aa).

The N-terminal 46 residues, 1-46 (MFRSFSTAAKQAVKGTYVQRAIVGGAAVVGIGASTMLYADSLTADA), are a transit peptide targeting the mitochondrion. Topologically, residues 47–253 (MTAAEHGLHA…SEPEHDERKR (207 aa)) are mitochondrial intermembrane. Residues 73–226 (SSIRRGYQVY…DLVEYEDGTP (154 aa)) form the Cytochrome c domain. Residues C86, C89, and H90 each contribute to the heme c site. A disordered region spans residues 117–137 (FEYDDEPDDQGNPKKRPGKLA). Heme c is bound at residue M210. The helical transmembrane segment at 254-272 (LGLKAMIVLSSLYLLSVWV) threads the bilayer. The Mitochondrial matrix portion of the chain corresponds to 273 to 292 (KKFKWASIKSRKIVFNPPKK).

This sequence belongs to the cytochrome c family. As to quaternary structure, component of the ubiquinol-cytochrome c oxidoreductase (cytochrome b-c1 complex, complex III, CIII), a multisubunit enzyme composed of 3 respiratory subunits cytochrome b, cytochrome c1 and Rieske protein, 2 core protein subunits, and additional low-molecular weight protein subunits. The complex exists as an obligatory dimer and forms supercomplexes (SCs) in the inner mitochondrial membrane with cytochrome c oxidase (complex IV, CIV). It depends on heme c as a cofactor.

Its subcellular location is the mitochondrion inner membrane. The catalysed reaction is a quinol + 2 Fe(III)-[cytochrome c](out) = a quinone + 2 Fe(II)-[cytochrome c](out) + 2 H(+)(out). In terms of biological role, component of the ubiquinol-cytochrome c oxidoreductase, a multisubunit transmembrane complex that is part of the mitochondrial electron transport chain which drives oxidative phosphorylation. The respiratory chain contains 3 multisubunit complexes succinate dehydrogenase (complex II, CII), ubiquinol-cytochrome c oxidoreductase (cytochrome b-c1 complex, complex III, CIII) and cytochrome c oxidase (complex IV, CIV), that cooperate to transfer electrons derived from NADH and succinate to molecular oxygen, creating an electrochemical gradient over the inner membrane that drives transmembrane transport and the ATP synthase. The cytochrome b-c1 complex catalyzes electron transfer from ubiquinol to cytochrome c, linking this redox reaction to translocation of protons across the mitochondrial inner membrane, with protons being carried across the membrane as hydrogens on the quinol. In the process called Q cycle, 2 protons are consumed from the matrix, 4 protons are released into the intermembrane space and 2 electrons are passed to cytochrome c. Cytochrome c1 is a catalytic core subunit containing a c-type heme. It transfers electrons from the [2Fe-2S] iron-sulfur cluster of the Rieske protein to cytochrome c. This chain is Cytochrome c1, heme protein, mitochondrial (CYT1), found in Kluyveromyces lactis (strain ATCC 8585 / CBS 2359 / DSM 70799 / NBRC 1267 / NRRL Y-1140 / WM37) (Yeast).